A 113-amino-acid chain; its full sequence is MLLELIPLLGIHFVLRTARAQSVTQPDIHITVSEGASLELRCNYSYGATPYLFWYVQSPGQGLQLLLKYFSGDTLVQGIKGFEAEFKRSQSSFNLRKPSVHWSDAAEYFCAVG.

The first 20 residues, 1–20 (MLLELIPLLGIHFVLRTARA), serve as a signal peptide directing secretion. Positions 21-113 (QSVTQPDIHI…DAAEYFCAVG (93 aa)) constitute an Ig-like domain. Residues C42 and C110 are joined by a disulfide bond. N-linked (GlcNAc...) asparagine glycosylation occurs at N43.

In terms of assembly, alpha-beta TR is a heterodimer composed of an alpha and beta chain; disulfide-linked. The alpha-beta TR is associated with the transmembrane signaling CD3 coreceptor proteins to form the TR-CD3 (TcR or TCR). The assembly of alpha-beta TR heterodimers with CD3 occurs in the endoplasmic reticulum where a single alpha-beta TR heterodimer associates with one CD3D-CD3E heterodimer, one CD3G-CD3E heterodimer and one CD247 homodimer forming a stable octameric structure. CD3D-CD3E and CD3G-CD3E heterodimers preferentially associate with TR alpha and TR beta chains, respectively. The association of the CD247 homodimer is the last step of TcR assembly in the endoplasmic reticulum and is required for transport to the cell surface.

The protein localises to the cell membrane. V region of the variable domain of T cell receptor (TR) alpha chain that participates in the antigen recognition. Alpha-beta T cell receptors are antigen specific receptors which are essential to the immune response and are present on the cell surface of T lymphocytes. Recognize peptide-major histocompatibility (MH) (pMH) complexes that are displayed by antigen presenting cells (APC), a prerequisite for efficient T cell adaptive immunity against pathogens. Binding of alpha-beta TR to pMH complex initiates TR-CD3 clustering on the cell surface and intracellular activation of LCK that phosphorylates the ITAM motifs of CD3G, CD3D, CD3E and CD247 enabling the recruitment of ZAP70. In turn ZAP70 phosphorylates LAT, which recruits numerous signaling molecules to form the LAT signalosome. The LAT signalosome propagates signal branching to three major signaling pathways, the calcium, the mitogen-activated protein kinase (MAPK) kinase and the nuclear factor NF-kappa-B (NF-kB) pathways, leading to the mobilization of transcription factors that are critical for gene expression and essential for T cell growth and differentiation. The T cell repertoire is generated in the thymus, by V-(D)-J rearrangement. This repertoire is then shaped by intrathymic selection events to generate a peripheral T cell pool of self-MH restricted, non-autoaggressive T cells. Post-thymic interaction of alpha-beta TR with the pMH complexes shapes TR structural and functional avidity. The polypeptide is T cell receptor alpha variable 8-3 (Homo sapiens (Human)).